Reading from the N-terminus, the 430-residue chain is Enolase (430 aa).

Gln167 is a binding site for (2R)-2-phosphoglycerate. Glu209 (proton donor) is an active-site residue. Residues Asp245, Glu286, and Asp313 each coordinate Mg(2+). 4 residues coordinate (2R)-2-phosphoglycerate: Lys338, Arg367, Ser368, and Lys389. The active-site Proton acceptor is Lys338.

The protein belongs to the enolase family. Mg(2+) serves as cofactor.

The protein localises to the cytoplasm. It localises to the secreted. The protein resides in the cell surface. The enzyme catalyses (2R)-2-phosphoglycerate = phosphoenolpyruvate + H2O. The protein operates within carbohydrate degradation; glycolysis; pyruvate from D-glyceraldehyde 3-phosphate: step 4/5. In terms of biological role, catalyzes the reversible conversion of 2-phosphoglycerate (2-PG) into phosphoenolpyruvate (PEP). It is essential for the degradation of carbohydrates via glycolysis. The protein is Enolase of Synechococcus sp. (strain CC9605).